The primary structure comprises 394 residues: 1-deoxy-D-xylulose 5-phosphate reductoisomerase (394 aa).

Positions 10, 11, 12, 13, 38, 39, 40, and 123 each coordinate NADPH. Residue lysine 124 coordinates 1-deoxy-D-xylulose 5-phosphate. Glutamate 125 provides a ligand contact to NADPH. Aspartate 149 provides a ligand contact to Mn(2+). 1-deoxy-D-xylulose 5-phosphate-binding residues include serine 150, glutamate 151, serine 175, and histidine 198. Glutamate 151 is a binding site for Mn(2+). Position 204 (glycine 204) interacts with NADPH. 1-deoxy-D-xylulose 5-phosphate contacts are provided by serine 211, asparagine 216, lysine 217, and glutamate 220. Position 220 (glutamate 220) interacts with Mn(2+).

Belongs to the DXR family. It depends on Mg(2+) as a cofactor. Requires Mn(2+) as cofactor.

The enzyme catalyses 2-C-methyl-D-erythritol 4-phosphate + NADP(+) = 1-deoxy-D-xylulose 5-phosphate + NADPH + H(+). The protein operates within isoprenoid biosynthesis; isopentenyl diphosphate biosynthesis via DXP pathway; isopentenyl diphosphate from 1-deoxy-D-xylulose 5-phosphate: step 1/6. Its function is as follows. Catalyzes the NADPH-dependent rearrangement and reduction of 1-deoxy-D-xylulose-5-phosphate (DXP) to 2-C-methyl-D-erythritol 4-phosphate (MEP). The sequence is that of 1-deoxy-D-xylulose 5-phosphate reductoisomerase from Cereibacter sphaeroides (strain ATCC 17029 / ATH 2.4.9) (Rhodobacter sphaeroides).